Consider the following 192-residue polypeptide: UPF0301 protein Bcep18194_A3962 (192 aa).

Belongs to the UPF0301 (AlgH) family.

The sequence is that of UPF0301 protein Bcep18194_A3962 from Burkholderia lata (strain ATCC 17760 / DSM 23089 / LMG 22485 / NCIMB 9086 / R18194 / 383).